The sequence spans 557 residues: Urocanate hydratase (557 aa).

Residues 53-54 (GG), Gln-131, 177-179 (GMG), Glu-197, Arg-202, 243-244 (NA), 264-268 (QTSAH), 274-275 (YL), and Tyr-323 contribute to the NAD(+) site. Cys-411 is a catalytic residue. Residue Gly-493 participates in NAD(+) binding.

Belongs to the urocanase family. The cofactor is NAD(+).

Its subcellular location is the cytoplasm. It carries out the reaction 4-imidazolone-5-propanoate = trans-urocanate + H2O. Its pathway is amino-acid degradation; L-histidine degradation into L-glutamate; N-formimidoyl-L-glutamate from L-histidine: step 2/3. Catalyzes the conversion of urocanate to 4-imidazolone-5-propionate. This Pseudomonas putida (strain GB-1) protein is Urocanate hydratase.